A 473-amino-acid chain; its full sequence is uncharacterized protein (473 aa).

An SET domain is found at 26–254 (PKLYIASSGV…KMSEIFNSFG (229 aa)).

This is an uncharacterized protein from Schizosaccharomyces pombe (strain 972 / ATCC 24843) (Fission yeast).